The sequence spans 206 residues: Small ribosomal subunit protein uS3 (206 aa).

In terms of domain architecture, KH type-2 spans 39–107 (IRSYINESFK…SVEVNVVGIK (69 aa)).

The protein belongs to the universal ribosomal protein uS3 family. In terms of assembly, part of the 30S ribosomal subunit. Forms a tight complex with proteins S10 and S14.

Binds the lower part of the 30S subunit head. Binds mRNA in the 70S ribosome, positioning it for translation. This chain is Small ribosomal subunit protein uS3, found in Wolbachia sp. subsp. Brugia malayi (strain TRS).